The following is a 208-amino-acid chain: Ras-related protein RABH1b (208 aa).

16-23 lines the GTP pocket; it reads GDQSVGKT. The Effector region signature appears at 38–46; it reads YQATIGIDF. GTP is bound by residues 64 to 68, 122 to 125, and 152 to 153; these read DTAGQ, NKTD, and SA. S-geranylgeranyl cysteine attachment occurs at residues Cys-206 and Cys-208. Position 208 is a cysteine methyl ester (Cys-208).

This sequence belongs to the small GTPase superfamily. Rab family. As to quaternary structure, interacts with the C-terminus of GC5, but not with GC3. In terms of tissue distribution, expressed in roots, stems, leaves and flowers.

It localises to the golgi apparatus membrane. It is found in the cytoplasm. The protein localises to the cytosol. Functionally, protein transport. Regulator of membrane traffic from the Golgi apparatus towards the endoplasmic reticulum (ER). Binds GTP and GDP and possesses intrinsic GTPase activity. This chain is Ras-related protein RABH1b (RABH1B), found in Arabidopsis thaliana (Mouse-ear cress).